We begin with the raw amino-acid sequence, 270 residues long: Putative pyruvate, phosphate dikinase regulatory protein 2 (270 aa).

Position 151 to 158 (151 to 158 (GVSRTSKT)) interacts with ADP.

It belongs to the pyruvate, phosphate/water dikinase regulatory protein family. PDRP subfamily.

The enzyme catalyses N(tele)-phospho-L-histidyl/L-threonyl-[pyruvate, phosphate dikinase] + ADP = N(tele)-phospho-L-histidyl/O-phospho-L-threonyl-[pyruvate, phosphate dikinase] + AMP + H(+). It carries out the reaction N(tele)-phospho-L-histidyl/O-phospho-L-threonyl-[pyruvate, phosphate dikinase] + phosphate + H(+) = N(tele)-phospho-L-histidyl/L-threonyl-[pyruvate, phosphate dikinase] + diphosphate. Functionally, bifunctional serine/threonine kinase and phosphorylase involved in the regulation of the pyruvate, phosphate dikinase (PPDK) by catalyzing its phosphorylation/dephosphorylation. This is Putative pyruvate, phosphate dikinase regulatory protein 2 from Listeria innocua serovar 6a (strain ATCC BAA-680 / CLIP 11262).